Here is a 558-residue protein sequence, read N- to C-terminus: Potassium-transporting ATPase potassium-binding subunit (558 aa).

A run of 11 helical transmembrane segments spans residues 1–21 (MDTL…VLVH), 58–78 (WPAY…VVYG), 85–105 (FLPY…NTAV), 130–150 (GLAV…IALV), 179–199 (LSLV…FAGF), 245–265 (PTAW…FSLP), 279–299 (TAIA…LTLF), 374–394 (GLYG…LLVG), 416–436 (ILVT…IPAV), 484–504 (ALGV…LALA), and 527–547 (FVGL…FPVL).

This sequence belongs to the KdpA family. The system is composed of three essential subunits: KdpA, KdpB and KdpC.

The protein resides in the cell membrane. In terms of biological role, part of the high-affinity ATP-driven potassium transport (or Kdp) system, which catalyzes the hydrolysis of ATP coupled with the electrogenic transport of potassium into the cytoplasm. This subunit binds the extracellular potassium ions and delivers the ions to the membrane domain of KdpB through an intramembrane tunnel. The polypeptide is Potassium-transporting ATPase potassium-binding subunit (Clavibacter sepedonicus (Clavibacter michiganensis subsp. sepedonicus)).